A 138-amino-acid chain; its full sequence is MRTLWIVAVWLTGVEGDLSQFGDMINKKTGTFGLFSYIYYGCYCGWGGKGKPQDATDRCCFVHDCCYGSVNGCDPKLSTYSYSFQNGDIVCGDDDPCLRAVCECDRVAAICSGENMNTYDKKYMLYSLFDCKEESEKC.

The N-terminal stretch at Met1–Gly16 is a signal peptide. 7 cysteine pairs are disulfide-bonded: Cys42-Cys131, Cys44-Cys60, Cys59-Cys111, Cys65-Cys138, Cys66-Cys104, Cys73-Cys97, and Cys91-Cys102. Ca(2+)-binding residues include Tyr43, Gly45, and Gly47. His63 is a catalytic residue. Position 64 (Asp64) interacts with Ca(2+). Asp105 is a catalytic residue.

In terms of assembly, monomer. Ca(2+) serves as cofactor. In terms of tissue distribution, expressed by the venom gland.

It is found in the secreted. The enzyme catalyses a 1,2-diacyl-sn-glycero-3-phosphocholine + H2O = a 1-acyl-sn-glycero-3-phosphocholine + a fatty acid + H(+). In terms of biological role, snake venom phospholipase that inhibits ADP- and collagen-induced human platelet aggregation. This inhibition is completely inhibited by abolition of catalytic activity in case of collagen as inducer and partially inhibited in case of ADP as inducer. PLA2 catalyzes the calcium-dependent hydrolysis of the 2-acyl groups in 3-sn-phosphoglycerides. The polypeptide is Acidic phospholipase A2 2 (Macrovipera lebetinus (Levantine viper)).